The following is a 324-amino-acid chain: tRNA dimethylallyltransferase (324 aa).

18–25 (GPTAVGKT) lines the ATP pocket. A substrate-binding site is contributed by 20–25 (TAVGKT). The tract at residues 43–46 (DSRQ) is interaction with substrate tRNA.

This sequence belongs to the IPP transferase family. As to quaternary structure, monomer. It depends on Mg(2+) as a cofactor.

It catalyses the reaction adenosine(37) in tRNA + dimethylallyl diphosphate = N(6)-dimethylallyladenosine(37) in tRNA + diphosphate. Its function is as follows. Catalyzes the transfer of a dimethylallyl group onto the adenine at position 37 in tRNAs that read codons beginning with uridine, leading to the formation of N6-(dimethylallyl)adenosine (i(6)A). The chain is tRNA dimethylallyltransferase from Salinibacter ruber (strain DSM 13855 / M31).